Consider the following 266-residue polypeptide: MRLIPLATPQQVGKWAARHIVKRINDFNPTADRPFVLGLPTGGTPLEAYKALIEMHKAGQVSFKHVVTFNMDEYVGLPKDHPESYHSFMYRNFFDHVDIPEENINLLDGNAPDIDAECRRYEEKIRAYGKIHLFMGGVGNDGHIAFNEPASSLASRTRIKTLTHDTRVANSRFFGGDVNQVPKYALTVGVGTLLDAQEVMILVLGHVKAQALQAAVEGNVNHMWTISCLQLHPKAVIVCDEPSTMELKVKTLKYFTELEAENIKDL.

The Proton acceptor; for enolization step role is filled by aspartate 72. The active-site For ring-opening step is the aspartate 141. Residue histidine 143 is the Proton acceptor; for ring-opening step of the active site. The active-site For ring-opening step is the glutamate 148.

Belongs to the glucosamine/galactosamine-6-phosphate isomerase family. NagB subfamily. Homohexamer.

It catalyses the reaction alpha-D-glucosamine 6-phosphate + H2O = beta-D-fructose 6-phosphate + NH4(+). Its pathway is amino-sugar metabolism; N-acetylneuraminate degradation; D-fructose 6-phosphate from N-acetylneuraminate: step 5/5. With respect to regulation, allosterically activated by N-acetylglucosamine 6-phosphate (GlcNAc6P). Functionally, catalyzes the reversible isomerization-deamination of glucosamine 6-phosphate (GlcN6P) to form fructose 6-phosphate (Fru6P) and ammonium ion. This chain is Glucosamine-6-phosphate deaminase, found in Cronobacter sakazakii (strain ATCC BAA-894) (Enterobacter sakazakii).